A 201-amino-acid chain; its full sequence is ATP-dependent Clp protease proteolytic subunit (201 aa).

Ser-101 (nucleophile) is an active-site residue. His-126 is a catalytic residue.

It belongs to the peptidase S14 family. In terms of assembly, component of the chloroplastic Clp protease core complex.

Its subcellular location is the plastid. It is found in the chloroplast stroma. It catalyses the reaction Hydrolysis of proteins to small peptides in the presence of ATP and magnesium. alpha-casein is the usual test substrate. In the absence of ATP, only oligopeptides shorter than five residues are hydrolyzed (such as succinyl-Leu-Tyr-|-NHMec, and Leu-Tyr-Leu-|-Tyr-Trp, in which cleavage of the -Tyr-|-Leu- and -Tyr-|-Trp bonds also occurs).. Cleaves peptides in various proteins in a process that requires ATP hydrolysis. Has a chymotrypsin-like activity. Plays a major role in the degradation of misfolded proteins. The polypeptide is ATP-dependent Clp protease proteolytic subunit (Chlorella vulgaris (Green alga)).